The following is a 287-amino-acid chain: Aromatic amino acid exporter YddG (287 aa).

Residues 1 to 5 lie on the Cytoplasmic side of the membrane; it reads MSRSS. A helical membrane pass occupies residues 6 to 24; it reads ATLIGFTAILLWSTLALAT. Residues 7–136 enclose the EamA 1 domain; it reads TLIGFTAILL…MGLAGTVVLL (130 aa). Residues 25–31 are Periplasmic-facing; the sequence is SSTGAVP. Residues 32-54 traverse the membrane as a helical segment; the sequence is PFLLTALTFTIGGAVGIAAGLAR. The Cytoplasmic segment spans residues 55–65; sequence GVGLSVLRQPW. A helical membrane pass occupies residues 66-86; the sequence is PVWVHGIGGLFGYHFFYFSAL. The Periplasmic portion of the chain corresponds to 87 to 90; it reads KLAP. A helical transmembrane segment spans residues 91–111; that stretch reads PAEAGLVAYLWPLLIVLFSAF. At 112 to 118 the chain is on the cytoplasmic side; it reads LPGERLR. Residues 119 to 139 form a helical membrane-spanning segment; it reads PAHVAGALMGLAGTVVLLGAR. Topologically, residues 140-149 are periplasmic; the sequence is AGGFGFAPEY. The chain crosses the membrane as a helical span at residues 150-170; that stretch reads VPGYLAAAACAVIWSVYSVAS. Residues 151 to 281 enclose the EamA 2 domain; the sequence is PGYLAAAACA…ALIVGGAAVA (131 aa). At 171–176 the chain is on the cytoplasmic side; it reads RRFARV. The helical transmembrane segment at 177–198 threads the bilayer; the sequence is PTEVVAGFCLATAALSALCHIL. At 199–208 the chain is on the periplasmic side; that stretch reads FEPSVWPVGS. The helical transmembrane segment at 209 to 233 threads the bilayer; that stretch reads EWLAVVALGIGPVGIAFYTWDIGMK. Residues 234–236 are Cytoplasmic-facing; it reads RGD. A helical transmembrane segment spans residues 237–258; the sequence is VRLLGVLSYAAPVLSTLLLVVA. Over 259–264 the chain is Periplasmic; it reads GFAAPS. The chain crosses the membrane as a helical span at residues 265–284; the sequence is GALAIACALIVGGAAVATLL. The Cytoplasmic portion of the chain corresponds to 285–287; it reads ARR.

This sequence belongs to the drug/metabolite transporter (DMT) superfamily. Aromatic amino acid/paraquat exporter (ArAA/P-E) (TC 2.A.7.17) family.

The protein localises to the cell inner membrane. It carries out the reaction L-threonine(in) = L-threonine(out). The catalysed reaction is L-methionine(in) = L-methionine(out). The enzyme catalyses L-lysine(in) = L-lysine(out). It catalyses the reaction L-glutamate(out) = L-glutamate(in). In terms of biological role, amino acid transporter with broad substrate specificity. Can transport various amino acids, including L-threonine, L-methionine, L-lysine and L-glutamate. This chain is Aromatic amino acid exporter YddG, found in Ancylobacter novellus (strain ATCC 8093 / DSM 506 / JCM 20403 / CCM 1077 / IAM 12100 / NBRC 12443 / NCIMB 10456) (Starkeya novella).